The sequence spans 157 residues: SsrA-binding protein (157 aa).

It belongs to the SmpB family.

It localises to the cytoplasm. Its function is as follows. Required for rescue of stalled ribosomes mediated by trans-translation. Binds to transfer-messenger RNA (tmRNA), required for stable association of tmRNA with ribosomes. tmRNA and SmpB together mimic tRNA shape, replacing the anticodon stem-loop with SmpB. tmRNA is encoded by the ssrA gene; the 2 termini fold to resemble tRNA(Ala) and it encodes a 'tag peptide', a short internal open reading frame. During trans-translation Ala-aminoacylated tmRNA acts like a tRNA, entering the A-site of stalled ribosomes, displacing the stalled mRNA. The ribosome then switches to translate the ORF on the tmRNA; the nascent peptide is terminated with the 'tag peptide' encoded by the tmRNA and targeted for degradation. The ribosome is freed to recommence translation, which seems to be the essential function of trans-translation. The protein is SsrA-binding protein of Limosilactobacillus fermentum (strain NBRC 3956 / LMG 18251) (Lactobacillus fermentum).